We begin with the raw amino-acid sequence, 29 residues long: Brevinin-2Ra (29 aa).

Cys-23 and Cys-29 form a disulfide bridge.

Expressed by the skin glands.

The protein localises to the secreted. Its function is as follows. Antimicrobial peptide. This Pelophylax ridibundus (Marsh frog) protein is Brevinin-2Ra.